Here is a 550-residue protein sequence, read N- to C-terminus: MFCVQCEQTIRTPAGNGCSYAQGMCGKTAETSDLQDLLIAALQGLSAWAVKAREYGIINHDVDNFAPRAFFSTLTNVNFDSPRIVGYAREAIAMREALKAQCLSVDANAHCDNPMADLQLVSDDLGELQRQAAEFTPNKDKAAIGENILGLRLLCLYGLKGAAAYMEHAHVLGQYDNDIYAQYHKIMAWLGTWPADMNALLECAMEIGQMNFKVMSILDAGETTKYGHPTPTQVNVKATEGKCILISGHDLKDLYNLLEQTEGTGVNVYTHGEMLPAHGYPELRKFKHLVGNYGSGWQNQQVEFARFPGPIVMTSNCIIDPTVGSYDDRIWTRSIVGWPGVSHLEGDDFGPVIAQAQQMAGFPYSEIPHLITVGFGRQTLLGAADTLIDLVSREKLRHIFLVGGCDGARGERNYFTDFATSVPDDCLILTLACGKYRFNKLEFGDIEGLPRLVDAGQCNDAYSAIILAVTLAEKLGCGVNDLPLSLVLSWFEQKAIVILLTLLSLGVKNIVTGPTAPGFFTPDLLAILNEKFGLRSVTTVEEDMKQLLSA.

[2Fe-2S] cluster is bound by residues C3, C6, C18, and C25. Positions 249, 273, 317, 405, 433, 458, 492, and 494 each coordinate hybrid [4Fe-2O-2S] cluster. Residue C405 is modified to Cysteine persulfide.

The protein belongs to the HCP family. It depends on [2Fe-2S] cluster as a cofactor. Hybrid [4Fe-2O-2S] cluster is required as a cofactor.

The protein localises to the cytoplasm. It carries out the reaction A + NH4(+) + H2O = hydroxylamine + AH2 + H(+). Its function is as follows. Catalyzes the reduction of hydroxylamine to form NH(3) and H(2)O. The sequence is that of Hydroxylamine reductase from Salmonella paratyphi A (strain ATCC 9150 / SARB42).